The chain runs to 336 residues: tRNA N6-adenosine threonylcarbamoyltransferase (336 aa).

H114 and H118 together coordinate Fe cation. Substrate contacts are provided by residues 136–140, D169, G182, D186, and N275; that span reads LVSGG. D301 serves as a coordination point for Fe cation.

The protein belongs to the KAE1 / TsaD family. The cofactor is Fe(2+).

It is found in the cytoplasm. The catalysed reaction is L-threonylcarbamoyladenylate + adenosine(37) in tRNA = N(6)-L-threonylcarbamoyladenosine(37) in tRNA + AMP + H(+). Its function is as follows. Required for the formation of a threonylcarbamoyl group on adenosine at position 37 (t(6)A37) in tRNAs that read codons beginning with adenine. Is involved in the transfer of the threonylcarbamoyl moiety of threonylcarbamoyl-AMP (TC-AMP) to the N6 group of A37, together with TsaE and TsaB. TsaD likely plays a direct catalytic role in this reaction. This Streptococcus pneumoniae (strain ATCC 700669 / Spain 23F-1) protein is tRNA N6-adenosine threonylcarbamoyltransferase.